A 165-amino-acid polypeptide reads, in one-letter code: UPF0303 protein BceJ2315_15790 (165 aa).

The protein belongs to the UPF0303 family.

The protein is UPF0303 protein BceJ2315_15790 of Burkholderia cenocepacia (strain ATCC BAA-245 / DSM 16553 / LMG 16656 / NCTC 13227 / J2315 / CF5610) (Burkholderia cepacia (strain J2315)).